The chain runs to 152 residues: UPF0266 membrane protein YobD (152 aa).

3 helical membrane-spanning segments follow: residues 6-26, 45-65, and 67-87; these read LLLILFIAALLAYALYDQFIM, VDSVIFVGLVAILIYNNVTSH, and AQMTTWLLSALALMGFYIFWI.

The protein belongs to the UPF0266 family.

The protein resides in the cell inner membrane. This Salmonella paratyphi C (strain RKS4594) protein is UPF0266 membrane protein YobD.